The sequence spans 474 residues: Bifunctional protein HldE (474 aa).

Residues 1-318 are ribokinase; it reads MKLSMPRFDQ…RAVQREQGSE (318 aa). ATP is bound at residue 194 to 197; sequence NLSE. Aspartate 263 is a catalytic residue. The interval 343–474 is cytidylyltransferase; it reads FTNGCFDILH…AIVEKIRQKG (132 aa).

This sequence in the N-terminal section; belongs to the carbohydrate kinase PfkB family. In the C-terminal section; belongs to the cytidylyltransferase family. In terms of assembly, homodimer.

The catalysed reaction is D-glycero-beta-D-manno-heptose 7-phosphate + ATP = D-glycero-beta-D-manno-heptose 1,7-bisphosphate + ADP + H(+). The enzyme catalyses D-glycero-beta-D-manno-heptose 1-phosphate + ATP + H(+) = ADP-D-glycero-beta-D-manno-heptose + diphosphate. Its pathway is nucleotide-sugar biosynthesis; ADP-L-glycero-beta-D-manno-heptose biosynthesis; ADP-L-glycero-beta-D-manno-heptose from D-glycero-beta-D-manno-heptose 7-phosphate: step 1/4. It functions in the pathway nucleotide-sugar biosynthesis; ADP-L-glycero-beta-D-manno-heptose biosynthesis; ADP-L-glycero-beta-D-manno-heptose from D-glycero-beta-D-manno-heptose 7-phosphate: step 3/4. It participates in bacterial outer membrane biogenesis; LPS core biosynthesis. Functionally, catalyzes the phosphorylation of D-glycero-D-manno-heptose 7-phosphate at the C-1 position to selectively form D-glycero-beta-D-manno-heptose-1,7-bisphosphate. Catalyzes the ADP transfer from ATP to D-glycero-beta-D-manno-heptose 1-phosphate, yielding ADP-D-glycero-beta-D-manno-heptose. This chain is Bifunctional protein HldE, found in Pseudomonas aeruginosa (strain ATCC 15692 / DSM 22644 / CIP 104116 / JCM 14847 / LMG 12228 / 1C / PRS 101 / PAO1).